The sequence spans 557 residues: Dihydroxy-acid dehydratase (557 aa).

Residue cysteine 50 participates in [2Fe-2S] cluster binding. Aspartate 82 is a binding site for Mg(2+). Cysteine 123 lines the [2Fe-2S] cluster pocket. Positions 124 and 125 each coordinate Mg(2+). Position 125 is an N6-carboxylysine (lysine 125). Cysteine 195 provides a ligand contact to [2Fe-2S] cluster. A Mg(2+)-binding site is contributed by glutamate 447. Serine 473 acts as the Proton acceptor in catalysis.

Belongs to the IlvD/Edd family. As to quaternary structure, homodimer. [2Fe-2S] cluster serves as cofactor. Mg(2+) is required as a cofactor.

It carries out the reaction (2R)-2,3-dihydroxy-3-methylbutanoate = 3-methyl-2-oxobutanoate + H2O. The catalysed reaction is (2R,3R)-2,3-dihydroxy-3-methylpentanoate = (S)-3-methyl-2-oxopentanoate + H2O. The protein operates within amino-acid biosynthesis; L-isoleucine biosynthesis; L-isoleucine from 2-oxobutanoate: step 3/4. It participates in amino-acid biosynthesis; L-valine biosynthesis; L-valine from pyruvate: step 3/4. In terms of biological role, functions in the biosynthesis of branched-chain amino acids. Catalyzes the dehydration of (2R,3R)-2,3-dihydroxy-3-methylpentanoate (2,3-dihydroxy-3-methylvalerate) into 2-oxo-3-methylpentanoate (2-oxo-3-methylvalerate) and of (2R)-2,3-dihydroxy-3-methylbutanoate (2,3-dihydroxyisovalerate) into 2-oxo-3-methylbutanoate (2-oxoisovalerate), the penultimate precursor to L-isoleucine and L-valine, respectively. This is Dihydroxy-acid dehydratase from Herminiimonas arsenicoxydans.